Consider the following 76-residue polypeptide: Exodeoxyribonuclease 7 small subunit (76 aa).

Belongs to the XseB family. As to quaternary structure, heterooligomer composed of large and small subunits.

Its subcellular location is the cytoplasm. The catalysed reaction is Exonucleolytic cleavage in either 5'- to 3'- or 3'- to 5'-direction to yield nucleoside 5'-phosphates.. In terms of biological role, bidirectionally degrades single-stranded DNA into large acid-insoluble oligonucleotides, which are then degraded further into small acid-soluble oligonucleotides. This Gluconacetobacter diazotrophicus (strain ATCC 49037 / DSM 5601 / CCUG 37298 / CIP 103539 / LMG 7603 / PAl5) protein is Exodeoxyribonuclease 7 small subunit.